A 140-amino-acid chain; its full sequence is Large ribosomal subunit protein uL11 (140 aa).

It belongs to the universal ribosomal protein uL11 family. Part of the ribosomal stalk of the 50S ribosomal subunit. Interacts with L10 and the large rRNA to form the base of the stalk. L10 forms an elongated spine to which L12 dimers bind in a sequential fashion forming a multimeric L10(L12)X complex. Post-translationally, one or more lysine residues are methylated.

Forms part of the ribosomal stalk which helps the ribosome interact with GTP-bound translation factors. The protein is Large ribosomal subunit protein uL11 of Pelobacter propionicus (strain DSM 2379 / NBRC 103807 / OttBd1).